We begin with the raw amino-acid sequence, 111 residues long: Nucleoid-associated protein VF_1686 (111 aa).

Disordered stretches follow at residues 1 to 23 and 89 to 111; these read MFGGKGGMGNLMKQAQQMQDRMQ and TQKEKMASVTGGMQMPPGFKMPF.

The protein belongs to the YbaB/EbfC family. In terms of assembly, homodimer.

It localises to the cytoplasm. It is found in the nucleoid. Binds to DNA and alters its conformation. May be involved in regulation of gene expression, nucleoid organization and DNA protection. This chain is Nucleoid-associated protein VF_1686, found in Aliivibrio fischeri (strain ATCC 700601 / ES114) (Vibrio fischeri).